A 394-amino-acid chain; its full sequence is GTPase Obg (394 aa).

Positions 4-162 (SNFVDYVKIY…LMVILELKLL (159 aa)) constitute an Obg domain. One can recognise an OBG-type G domain in the interval 163–329 (ADVGLVGFPN…LKDILWTELN (167 aa)). Residues 169–176 (GFPNAGKS), 194–198 (FTTLE), 216–219 (DIPG), 283–286 (TKSD), and 310–312 (SSV) contribute to the GTP site. Residues Ser-176 and Thr-196 each coordinate Mg(2+). The tract at residues 358 to 394 (KDMGEDEDFEYEYEEDADDDFDYEYEDENWDEEEEKK) is disordered. Residues 361–394 (GEDEDFEYEYEEDADDDFDYEYEDENWDEEEEKK) show a composition bias toward acidic residues.

The protein belongs to the TRAFAC class OBG-HflX-like GTPase superfamily. OBG GTPase family. Monomer. Mg(2+) serves as cofactor.

It localises to the cytoplasm. Functionally, an essential GTPase which binds GTP, GDP and possibly (p)ppGpp with moderate affinity, with high nucleotide exchange rates and a fairly low GTP hydrolysis rate. Plays a role in control of the cell cycle, stress response, ribosome biogenesis and in those bacteria that undergo differentiation, in morphogenesis control. This is GTPase Obg from Phocaeicola vulgatus (strain ATCC 8482 / DSM 1447 / JCM 5826 / CCUG 4940 / NBRC 14291 / NCTC 11154) (Bacteroides vulgatus).